Consider the following 356-residue polypeptide: Protein RecA (356 aa).

An ATP-binding site is contributed by 68 to 75 (GPESSGKT).

This sequence belongs to the RecA family.

It localises to the cytoplasm. Its function is as follows. Can catalyze the hydrolysis of ATP in the presence of single-stranded DNA, the ATP-dependent uptake of single-stranded DNA by duplex DNA, and the ATP-dependent hybridization of homologous single-stranded DNAs. It interacts with LexA causing its activation and leading to its autocatalytic cleavage. In Clostridium botulinum (strain Eklund 17B / Type B), this protein is Protein RecA.